The following is a 393-amino-acid chain: SET domain-containing protein DDB_G0283443 (393 aa).

The 296-residue stretch at 17–312 (KKIEINETLE…KGDELSISYI (296 aa)) folds into the SET domain.

This sequence belongs to the class V-like SAM-binding methyltransferase superfamily.

In terms of biological role, probable methyltransferase. This is SET domain-containing protein DDB_G0283443 from Dictyostelium discoideum (Social amoeba).